A 337-amino-acid polypeptide reads, in one-letter code: MGNLISLIFCCGRRQRSNIPPAMETAPLELPPNRFVFAAVPPYLNPNPNYVDQYPGNCLPPPVTEPPMLPYNFNHLHHYPPNSYQLPHPLFHGGRYPILPPPTYVHQKAVTIRNDVNLKKKTLTLIPDPENPNRLLVSFTFDASMPGRITVVFFATEDAECNLRATKEDTLPPITFDFGEGLGQKFIQSSGTGIDLTAFKDSELFKEVDTDVFPLAVKAEATPAEEGKSGSTNVQITQVVYTKEKGEIKIEVVKQILWVNKRRYELLEIYGIENTVDGSDEGKECVVCLSEPRDTTVLPCRHMCMCSGCAKALRFQTNLCPVCRQPVEMLLEINKNG.

Residue Gly-2 is the site of N-myristoyl glycine attachment. Residues 139 to 255 are DAR2 domain; the sequence is FTFDASMPGR…GEIKIEVVKQ (117 aa). An RING-type; atypical zinc finger spans residues 285-324; the sequence is CVVCLSEPRDTTVLPCRHMCMCSGCAKALRFQTNLCPVCR.

It belongs to the RING-type zinc finger family. LOG2 subfamily. Post-translationally, myristoylated (in vitro).

The catalysed reaction is S-ubiquitinyl-[E2 ubiquitin-conjugating enzyme]-L-cysteine + [acceptor protein]-L-lysine = [E2 ubiquitin-conjugating enzyme]-L-cysteine + N(6)-ubiquitinyl-[acceptor protein]-L-lysine.. It functions in the pathway protein modification; protein ubiquitination. Its function is as follows. Acts as an E3 ubiquitin-protein ligase, or as part of E3 complex, which accepts ubiquitin from specific E2 ubiquitin-conjugating enzymes and then transfers it to substrates (in vitro). The sequence is that of Probable E3 ubiquitin-protein ligase LUL1 (LUL1) from Arabidopsis thaliana (Mouse-ear cress).